The chain runs to 229 residues: MSNRGASLKGLFLAVLLVSNTLLTKEGVTSLPICPIGSVNCQVSLGELFDRAVKLSHYIHYLSSEIFNEFDERYAQGRGFITKAVNGCHTSSLTTPEDKEQAQQIHHEDLLNLVVGVLRSWNDPLIHLASEVQRIKEAPDTILWKAVEIEEQNKRLLEGMEKIVGRVHSGDAGNEIYSHWDGLPSLQLADEDSRLFAFYNLLHCLRRDSHKIDNYLKVLKCRLIHDSNC.

Positions 1–30 are cleaved as a signal peptide; sequence MSNRGASLKGLFLAVLLVSNTLLTKEGVTS. Intrachain disulfides connect Cys34–Cys41, Cys88–Cys204, and Cys221–Cys229.

This sequence belongs to the somatotropin/prolactin family.

It is found in the secreted. The polypeptide is Prolactin (PRL) (Gallus gallus (Chicken)).